Reading from the N-terminus, the 190-residue chain is Jupiter microtubule associated homolog 2 (190 aa).

Methionine 1 is subject to N-acetylmethionine. The span at 1 to 15 (MFQGADSQAGKSGSR) shows a compositional bias: polar residues. The disordered stretch occupies residues 1–190 (MFQGADSQAG…PGGKSSLSFY (190 aa)). Lysine 11 carries the post-translational modification N6-acetyllysine. Serine 30 bears the Phosphoserine mark. Positions 35–44 (ISSSKPNRMA) are enriched in polar residues. 3 positions are modified to phosphoserine: serine 45, serine 69, and serine 97. 2 stretches are compositionally biased toward basic and acidic residues: residues 110–129 (KPKDHVLLCEGEDSKSDLKA) and 138–153 (EQSDKGSSKEVEHAKI). The residue at position 144 (serine 144) is a Phosphoserine.

Belongs to the JUPITER family. In terms of assembly, monomer. Dimer. Interacts with TPCN1.

The protein resides in the cytoplasm. It localises to the nucleus. In terms of biological role, nicotinic acid adenine dinucleotide phosphate (NAADP) binding protein required for NAADP-evoked intracellular calcium release. Confers NAADP-sensitivity to the two pore channels (TPCs) complex. Enables NAADP to activate Ca(2+) release from the endoplasmic reticulum through ryanodine receptors. The sequence is that of Jupiter microtubule associated homolog 2 from Mus musculus (Mouse).